A 398-amino-acid chain; its full sequence is Na(+)/H(+) antiporter NhaA 2 (398 aa).

The next 11 membrane-spanning stretches (helical) occupy residues 17–37 (ILLMLAVAMAMLLANSPLAGL), 59–79 (LLLWVNDGLMALFFLLIGLEV), 95–115 (SLPTFAAIGGMVFPALVYLGF), 125–145 (GWAIPAATDIAFALGVLALLG), 154–174 (VFLLALAIIDDIGVIVIIALF), 179–199 (LSITSLVIAAIAIGSMVILNL), 213–233 (LLLWIAVLKSGVHATLAGVVI), 262–282 (FMILPLFAFANAGLSLSGMSL), 288–308 (PAALGVMLGLLLGKPLGVLLF), 331–351 (AVAVLCGVGFTMSIFISSLAF), and 364–384 (LGTLVGSMLSASIAYFWLTKV).

This sequence belongs to the NhaA Na(+)/H(+) (TC 2.A.33) antiporter family.

The protein localises to the cell inner membrane. The enzyme catalyses Na(+)(in) + 2 H(+)(out) = Na(+)(out) + 2 H(+)(in). Functionally, na(+)/H(+) antiporter that extrudes sodium in exchange for external protons. The sequence is that of Na(+)/H(+) antiporter NhaA 2 from Shewanella denitrificans (strain OS217 / ATCC BAA-1090 / DSM 15013).